A 557-amino-acid polypeptide reads, in one-letter code: Probable protein kinase UbiB (557 aa).

Residues A121–A509 form the Protein kinase domain. ATP contacts are provided by residues L127 to V135 and K154. Residue D289 is the Proton acceptor of the active site. A run of 2 helical transmembrane segments spans residues V506–H526 and V535–L555.

This sequence belongs to the ABC1 family. UbiB subfamily.

The protein resides in the cell inner membrane. It functions in the pathway cofactor biosynthesis; ubiquinone biosynthesis [regulation]. Functionally, is probably a protein kinase regulator of UbiI activity which is involved in aerobic coenzyme Q (ubiquinone) biosynthesis. The chain is Probable protein kinase UbiB from Xanthomonas campestris pv. campestris (strain 8004).